A 309-amino-acid chain; its full sequence is Glutaminase (309 aa).

The substrate site is built by Ser-65, Asn-117, Glu-162, Asn-169, Tyr-193, Tyr-245, and Val-263.

It belongs to the glutaminase family. Homotetramer.

The enzyme catalyses L-glutamine + H2O = L-glutamate + NH4(+). This Geobacillus thermodenitrificans (strain NG80-2) protein is Glutaminase.